A 201-amino-acid polypeptide reads, in one-letter code: Probable nicotinate-nucleotide adenylyltransferase (201 aa).

The protein belongs to the NadD family.

The catalysed reaction is nicotinate beta-D-ribonucleotide + ATP + H(+) = deamido-NAD(+) + diphosphate. Its pathway is cofactor biosynthesis; NAD(+) biosynthesis; deamido-NAD(+) from nicotinate D-ribonucleotide: step 1/1. Catalyzes the reversible adenylation of nicotinate mononucleotide (NaMN) to nicotinic acid adenine dinucleotide (NaAD). The polypeptide is Probable nicotinate-nucleotide adenylyltransferase (Carboxydothermus hydrogenoformans (strain ATCC BAA-161 / DSM 6008 / Z-2901)).